The chain runs to 278 residues: Shikimate dehydrogenase (NADP(+)) (278 aa).

Shikimate contacts are provided by residues 19–21 and threonine 66; that span reads SLS. Lysine 70 (proton acceptor) is an active-site residue. An NADP(+)-binding site is contributed by aspartate 82. 2 residues coordinate shikimate: asparagine 91 and aspartate 107. Residues 133–137, 157–162, and isoleucine 222 contribute to the NADP(+) site; these read GSGGA and NRTRAR. A shikimate-binding site is contributed by tyrosine 224. An NADP(+)-binding site is contributed by glycine 245.

This sequence belongs to the shikimate dehydrogenase family. In terms of assembly, homodimer.

It catalyses the reaction shikimate + NADP(+) = 3-dehydroshikimate + NADPH + H(+). Its pathway is metabolic intermediate biosynthesis; chorismate biosynthesis; chorismate from D-erythrose 4-phosphate and phosphoenolpyruvate: step 4/7. In terms of biological role, involved in the biosynthesis of the chorismate, which leads to the biosynthesis of aromatic amino acids. Catalyzes the reversible NADPH linked reduction of 3-dehydroshikimate (DHSA) to yield shikimate (SA). The polypeptide is Shikimate dehydrogenase (NADP(+)) (Jannaschia sp. (strain CCS1)).